A 140-amino-acid chain; its full sequence is Large-conductance mechanosensitive channel (140 aa).

The next 3 membrane-spanning stretches (helical) occupy residues 14-34, 37-57, and 66-86; these read VLDL…VKSL, YLIN…DWVL, and FGSF…VFIL.

Belongs to the MscL family. In terms of assembly, homopentamer.

Its subcellular location is the cell membrane. Its function is as follows. Channel that opens in response to stretch forces in the membrane lipid bilayer. May participate in the regulation of osmotic pressure changes within the cell. The chain is Large-conductance mechanosensitive channel from Pediococcus pentosaceus (strain ATCC 25745 / CCUG 21536 / LMG 10740 / 183-1w).